Reading from the N-terminus, the 190-residue chain is Holliday junction branch migration complex subunit RuvA (190 aa).

A domain I region spans residues 1–65 (MIGTLSGTVE…DGVSQLYGFA (65 aa)). Residues 66-137 (NREEQNCMRM…LTPQVQKFEL (72 aa)) form a domain II region. The flexible linker stretch occupies residues 137-141 (LNRFA). The interval 142–190 (ATTRTDSEAVAALLSLGYERTAALGALQKVGVCDSTEDAVRRALLELSK) is domain III.

Belongs to the RuvA family. As to quaternary structure, homotetramer. Forms an RuvA(8)-RuvB(12)-Holliday junction (HJ) complex. HJ DNA is sandwiched between 2 RuvA tetramers; dsDNA enters through RuvA and exits via RuvB. An RuvB hexamer assembles on each DNA strand where it exits the tetramer. Each RuvB hexamer is contacted by two RuvA subunits (via domain III) on 2 adjacent RuvB subunits; this complex drives branch migration. In the full resolvosome a probable DNA-RuvA(4)-RuvB(12)-RuvC(2) complex forms which resolves the HJ.

Its subcellular location is the cytoplasm. Its function is as follows. The RuvA-RuvB-RuvC complex processes Holliday junction (HJ) DNA during genetic recombination and DNA repair, while the RuvA-RuvB complex plays an important role in the rescue of blocked DNA replication forks via replication fork reversal (RFR). RuvA specifically binds to HJ cruciform DNA, conferring on it an open structure. The RuvB hexamer acts as an ATP-dependent pump, pulling dsDNA into and through the RuvAB complex. HJ branch migration allows RuvC to scan DNA until it finds its consensus sequence, where it cleaves and resolves the cruciform DNA. The polypeptide is Holliday junction branch migration complex subunit RuvA (Anaplasma marginale (strain Florida)).